A 113-amino-acid chain; its full sequence is Phosphoribosyl-ATP pyrophosphatase (113 aa).

This sequence belongs to the PRA-PH family.

The protein localises to the cytoplasm. The catalysed reaction is 1-(5-phospho-beta-D-ribosyl)-ATP + H2O = 1-(5-phospho-beta-D-ribosyl)-5'-AMP + diphosphate + H(+). The protein operates within amino-acid biosynthesis; L-histidine biosynthesis; L-histidine from 5-phospho-alpha-D-ribose 1-diphosphate: step 2/9. In Hydrogenovibrio crunogenus (strain DSM 25203 / XCL-2) (Thiomicrospira crunogena), this protein is Phosphoribosyl-ATP pyrophosphatase.